The chain runs to 471 residues: Microtubule-associated tyrosine carboxypeptidase 1 (471 aa).

2 disordered regions span residues 1–40 (MVLD…PLYP) and 76–116 (HMRR…LRPA). Histidine 280 is a Zn(2+) binding site. Catalysis depends on glutamate 281, which acts as the Nucleophile. Histidine 285 and glutamate 316 together coordinate Zn(2+).

The protein belongs to the peptidase MATCAP family. The cofactor is Zn(2+).

Its subcellular location is the cytoplasm. It localises to the cytoskeleton. It catalyses the reaction C-terminal L-alpha-aminoacyl-L-glutamyl-L-glutamyl-L-tyrosyl-[tubulin] + H2O = C-terminal L-alpha-aminoacyl-L-glutamyl-L-glutamyl-[tubulin] + L-tyrosine. The catalysed reaction is C-terminal L-alpha-aminoacyl-L-glutamyl-L-glutamyl-L-phenylalanyl-[tubulin] + H2O = C-terminal L-alpha-aminoacyl-L-glutamyl-L-glutamyl-[tubulin] + L-phenylalanine. Tyrosine carboxypeptidase that removes the C-terminal tyrosine residue of alpha-tubulin, thereby regulating microtubule dynamics and function. Also able to remove the C-terminal phenylalanine residue of alpha-tubulin TUBA8. Recognizes adjacent tubulin dimers along the same protofilament. This is Microtubule-associated tyrosine carboxypeptidase 1 from Homo sapiens (Human).